A 540-amino-acid chain; its full sequence is DM7 family protein GD24576 (540 aa).

The disordered stretch occupies residues 416 to 443 (ATDTRGRDEIRTSCDQSQEKDEGSAEAD). Residues 417-443 (TDTRGRDEIRTSCDQSQEKDEGSAEAD) show a composition bias toward basic and acidic residues.

It belongs to the DM7 family.

The protein is DM7 family protein GD24576 of Drosophila simulans (Fruit fly).